The primary structure comprises 325 residues: Biotin synthase (325 aa).

In terms of domain architecture, Radical SAM core spans 51 to 280 (FMGRKADLCT…NVYIRYAGGR (230 aa)). [4Fe-4S] cluster is bound by residues Cys-69, Cys-73, and Cys-76. [2Fe-2S] cluster contacts are provided by Ser-113, Cys-145, Cys-205, and Arg-275.

The protein belongs to the radical SAM superfamily. Biotin synthase family. In terms of assembly, homodimer. [4Fe-4S] cluster is required as a cofactor. Requires [2Fe-2S] cluster as cofactor.

It catalyses the reaction (4R,5S)-dethiobiotin + (sulfur carrier)-SH + 2 reduced [2Fe-2S]-[ferredoxin] + 2 S-adenosyl-L-methionine = (sulfur carrier)-H + biotin + 2 5'-deoxyadenosine + 2 L-methionine + 2 oxidized [2Fe-2S]-[ferredoxin]. It participates in cofactor biosynthesis; biotin biosynthesis; biotin from 7,8-diaminononanoate: step 2/2. Its function is as follows. Catalyzes the conversion of dethiobiotin (DTB) to biotin by the insertion of a sulfur atom into dethiobiotin via a radical-based mechanism. This chain is Biotin synthase, found in Clostridioides difficile (strain 630) (Peptoclostridium difficile).